The chain runs to 90 residues: Cell division topological specificity factor 2 (90 aa).

Belongs to the MinE family.

In terms of biological role, prevents the cell division inhibition by proteins MinC and MinD at internal division sites while permitting inhibition at polar sites. This ensures cell division at the proper site by restricting the formation of a division septum at the midpoint of the long axis of the cell. The chain is Cell division topological specificity factor 2 from Syntrophomonas wolfei subsp. wolfei (strain DSM 2245B / Goettingen).